A 113-amino-acid polypeptide reads, in one-letter code: Putative anti-sigma factor antagonist TM_1081 (113 aa).

The region spanning 1–110 is the STAS domain; it reads MFPYKIVDDV…DTISEAMEEV (110 aa). The residue at position 55 (serine 55) is a Phosphoserine.

It belongs to the anti-sigma-factor antagonist family. In terms of processing, phosphorylated on a serine residue.

In the phosphorylated form it could act as an anti-anti-sigma factor that counteracts an anti-sigma factor and thus releases a sigma factor from inhibition. The protein is Putative anti-sigma factor antagonist TM_1081 of Thermotoga maritima (strain ATCC 43589 / DSM 3109 / JCM 10099 / NBRC 100826 / MSB8).